The primary structure comprises 177 residues: Transmembrane protein 196 (177 aa).

4 helical membrane-spanning segments follow: residues 11-31 (LLVLSVLEIGLGLSSVAVGAV), 47-67 (SSPVWSGACFLICGVCGIFCA), 73-93 (LIMILFSACCICGLIGGILNI), and 106-126 (LYSLYLASMSLACIGISGCTI). Residues 152–162 (HSHEMTEKDTE) are compositionally biased toward basic and acidic residues. A disordered region spans residues 152 to 177 (HSHEMTEKDTENITNGGGPLALNGRV).

It localises to the cytoplasm. Its subcellular location is the membrane. The chain is Transmembrane protein 196 (tmem196) from Xenopus tropicalis (Western clawed frog).